The chain runs to 239 residues: Tetrahydromethanopterin S-methyltransferase subunit A (239 aa).

The Cytoplasmic segment spans residues 1 to 215 (MADKKAPAAG…EAAMIAKFNS (215 aa)). H85 contributes to the 5-hydroxybenzimidazolylcob(I)amide binding site. Residues 216-238 (GYYNGKIQGIAIGLFLSIVIFSL) traverse the membrane as a helical segment. Position 239 (L239) is a topological domain, extracellular.

The protein belongs to the MtrA family. The complex is composed of 8 subunits; MtrA, MtrB, MtrC, MtrD, MtrE, MtrF, MtrG and MtrH. 5-hydroxybenzimidazolylcob(I)amide serves as cofactor.

It is found in the cell membrane. It catalyses the reaction 5-methyl-5,6,7,8-tetrahydromethanopterin + coenzyme M + 2 Na(+)(in) = 5,6,7,8-tetrahydromethanopterin + methyl-coenzyme M + 2 Na(+)(out). Its pathway is one-carbon metabolism; methanogenesis from CO(2); methyl-coenzyme M from 5,10-methylene-5,6,7,8-tetrahydromethanopterin: step 2/2. Its function is as follows. Part of a complex that catalyzes the formation of methyl-coenzyme M and tetrahydromethanopterin from coenzyme M and methyl-tetrahydromethanopterin. This is an energy-conserving, sodium-ion translocating step. This is Tetrahydromethanopterin S-methyltransferase subunit A from Methanococcus maripaludis (strain DSM 14266 / JCM 13030 / NBRC 101832 / S2 / LL).